Here is an 899-residue protein sequence, read N- to C-terminus: Conserved oligomeric Golgi complex subunit 3 (899 aa).

This sequence belongs to the COG3 family. In terms of assembly, component of the conserved oligomeric Golgi complex which is composed of eight different subunits and is required for normal Golgi morphology and localization.

The protein resides in the golgi apparatus membrane. Functionally, involved in ER-Golgi transport. The chain is Conserved oligomeric Golgi complex subunit 3 from Aedes aegypti (Yellowfever mosquito).